Consider the following 360-residue polypeptide: Phospho-N-acetylmuramoyl-pentapeptide-transferase (360 aa).

Helical transmembrane passes span 21–41, 73–93, 94–114, 132–152, 168–188, 199–219, 236–256, 263–283, 288–308, and 338–358; these read YLSFRAILSVLTALGLSLWMG, TMGGVMILAAISITILLWANL, SNPYVWAVLAVLMGYGAVGFV, WKYFWQSAIALIVAFALYAYG, VMPQLGLMYIVLTYFVIVGTS, GLAIMPTVLVAAGFAVIAWAT, ASELVVVCTAIVGAGLGFLWF, VFMGDVGSLALGGALGTIAVL, LVLVIMGGVFVMETLSVILQV, and VIVRFWIISMVLVLIGLATLK.

This sequence belongs to the glycosyltransferase 4 family. MraY subfamily. It depends on Mg(2+) as a cofactor.

The protein localises to the cell inner membrane. It carries out the reaction UDP-N-acetyl-alpha-D-muramoyl-L-alanyl-gamma-D-glutamyl-meso-2,6-diaminopimeloyl-D-alanyl-D-alanine + di-trans,octa-cis-undecaprenyl phosphate = di-trans,octa-cis-undecaprenyl diphospho-N-acetyl-alpha-D-muramoyl-L-alanyl-D-glutamyl-meso-2,6-diaminopimeloyl-D-alanyl-D-alanine + UMP. The protein operates within cell wall biogenesis; peptidoglycan biosynthesis. Functionally, catalyzes the initial step of the lipid cycle reactions in the biosynthesis of the cell wall peptidoglycan: transfers peptidoglycan precursor phospho-MurNAc-pentapeptide from UDP-MurNAc-pentapeptide onto the lipid carrier undecaprenyl phosphate, yielding undecaprenyl-pyrophosphoryl-MurNAc-pentapeptide, known as lipid I. This chain is Phospho-N-acetylmuramoyl-pentapeptide-transferase, found in Vibrio vulnificus (strain CMCP6).